We begin with the raw amino-acid sequence, 333 residues long: Uroporphyrinogen decarboxylase (333 aa).

Substrate contacts are provided by residues 21-25, D70, Y139, S194, and H309; that span reads RQVGR.

It belongs to the uroporphyrinogen decarboxylase family. In terms of assembly, homodimer.

The protein resides in the cytoplasm. The catalysed reaction is uroporphyrinogen III + 4 H(+) = coproporphyrinogen III + 4 CO2. Its pathway is porphyrin-containing compound metabolism; protoporphyrin-IX biosynthesis; coproporphyrinogen-III from 5-aminolevulinate: step 4/4. Catalyzes the decarboxylation of four acetate groups of uroporphyrinogen-III to yield coproporphyrinogen-III. The polypeptide is Uroporphyrinogen decarboxylase (Chlamydia caviae (strain ATCC VR-813 / DSM 19441 / 03DC25 / GPIC) (Chlamydophila caviae)).